A 255-amino-acid chain; its full sequence is Cyclase-like protein 1 (255 aa).

Positions 1-24 (MTRSVSFPLFLFAVVLSLSSSLLA) are cleaved as a signal peptide.

Belongs to the Cyclase 1 superfamily.

The protein resides in the secreted. It localises to the extracellular space. The protein localises to the extracellular matrix. Functionally, acts as a negative regulator of fumonisin B1- and pathogen-induced programmed cell death (PCD), and regulates pathogen-induced symptom development. May function redundantly with CYCLASE2 for normal plant growth, development and viability. This chain is Cyclase-like protein 1, found in Arabidopsis thaliana (Mouse-ear cress).